Here is an 86-residue protein sequence, read N- to C-terminus: Evasin-3 (86 aa).

Positions M1–G20 are cleaved as a signal peptide. Disulfide bonds link C42/C57, C46/C59, and C53/C70. N-linked (GlcNAc...) asparagine glycosylation occurs at N45. A glycan (N-linked (GlcNAc...) asparagine) is linked at N76.

Monomer.

Its subcellular location is the secreted. Its function is as follows. Salivary chemokine-binding protein which shows chemokine neutralizing activity and binds to host chemokines CXCL1, CXCL2, CXCL3, CXCL5, CXCL6 and CXCL8. Binds to CXCL8 with 1:1 stoichiometry. Disrupts CXCL8 homodimer formation, disrupts the glycosaminoglycan-binding site of CXCL8 and inhibits the interaction of CXCL8 with CXCR2. In Rhipicephalus sanguineus (Brown dog tick), this protein is Evasin-3.